A 929-amino-acid polypeptide reads, in one-letter code: Facilitated trehalose transporter Tret1 (929 aa).

The interval 1–275 is disordered; that stretch reads MSGRDNRAAG…VGYQQQKATS (275 aa). The Cytoplasmic portion of the chain corresponds to 1–462; that stretch reads MSGRDNRAAG…LEVYRPTTNP (462 aa). Gly residues predominate over residues 10–26; that stretch reads GAGGGSGGGGGGGGGGG. The segment covering 41-59 has biased composition (basic and acidic residues); that stretch reads KLKEKLTRAGEELGYHRVE. A compositionally biased stretch (polar residues) spans 60–72; sequence SNLSASNTATSLD. Composition is skewed to low complexity over residues 85 to 141, 168 to 178, and 237 to 254; these read AAPQ…QPLR, QEIQQQQLQQQ, and SNSN…VAAD. Phosphoserine occurs at positions 320, 321, and 322. Residues 352-371 are disordered; it reads VLHGSSTDSDEEGEDAEHKR. Residues Ser-392 and Ser-394 each carry the phosphoserine modification. The interval 398 to 420 is disordered; the sequence is FLSSRQNFQQQRSISTDSRKSRR. Positions 402-413 are enriched in polar residues; that stretch reads RQNFQQQRSIST. The chain crosses the membrane as a helical span at residues 463 to 483; that stretch reads IYIWTQVLAALSVSLGSLVVG. Topologically, residues 484–512 are extracellular; the sequence is FSSAYTSPALVSMTDRNLTSFDVSTEDAS. A glycan (N-linked (GlcNAc...) asparagine) is linked at Asn-500. Residues 513 to 533 traverse the membrane as a helical segment; sequence WVGGIMPLAGLAGGIAGGPLI. Residues 534–541 are Cytoplasmic-facing; the sequence is EYLGRRNT. The helical transmembrane segment at 542-562 threads the bilayer; that stretch reads ILATAVPFIISWLLIACAVNV. The Extracellular segment spans residues 563–569; the sequence is PMVLSGR. A helical transmembrane segment spans residues 570–590; that stretch reads FLAGFCVGIASLSLPVYLGET. Residues 591–596 lie on the Cytoplasmic side of the membrane; it reads VQPEVR. Residues 597–617 form a helical membrane-spanning segment; that stretch reads GTLGLLPTAFGNIGILLCFIA. The Extracellular segment spans residues 618-624; it reads GTYMDWS. Residues 625–645 form a helical membrane-spanning segment; the sequence is MLAFLGGALPVPFLILMFLIP. Residues 646–708 are Cytoplasmic-facing; it reads ETPRWYVSRG…ELLKRSNLKP (63 aa). Residues 709-729 form a helical membrane-spanning segment; the sequence is LSISLGLMFFQQLSGINAVIF. At 730-745 the chain is on the extracellular side; sequence YTVQIFKDAGSTLDGN. A helical membrane pass occupies residues 746-766; the sequence is VCTIIVGTVNFIATFIGILLI. The Cytoplasmic portion of the chain corresponds to 767–772; it reads DRAGRK. A helical transmembrane segment spans residues 773–793; that stretch reads ILLYVSNIAMILTLFVLGGFF. Over 794-804 the chain is Extracellular; sequence YCKANGMDVSN. Residues 805-825 form a helical membrane-spanning segment; sequence VGLLPLCCFVVYILGFSLGFG. The Cytoplasmic segment spans residues 826 to 839; the sequence is PIPWLMMGEILPAK. Residues 840 to 860 form a helical membrane-spanning segment; that stretch reads IRGSAASVATAFNWTCTFVVT. Topologically, residues 861–873 are extracellular; that stretch reads KSFLDMIKLIGAH. Residues 874–894 form a helical membrane-spanning segment; the sequence is GAFWLFGVICCIGMFFVIFCV. At 895–929 the chain is on the cytoplasmic side; sequence PETQGKTLEDIERKMMGRVRRMSSVANIKPLSFNM. Phosphoserine occurs at positions 917 and 918.

This sequence belongs to the major facilitator superfamily. Sugar transporter (TC 2.A.1.1) family. Trehalose transporter subfamily.

It is found in the cell membrane. Low-capacity facilitative transporter for trehalose. Does not transport maltose, sucrose or lactose. Mediates the bidirectional transfer of trehalose. Responsible for the transport of trehalose synthesized in the fat body and the incorporation of trehalose into other tissues that require a carbon source, thereby regulating trehalose levels in the hemolymph. In Drosophila grimshawi (Hawaiian fruit fly), this protein is Facilitated trehalose transporter Tret1.